Consider the following 372-residue polypeptide: Protein RecA (372 aa).

Residue 66–73 coordinates ATP; it reads GPESSGKT. Residues 328-359 form a disordered region; it reads GVGVRPEEPTATESGPDAATAESAPAVPAPAT. The segment covering 345-359 has biased composition (low complexity); that stretch reads AATAESAPAVPAPAT.

Belongs to the RecA family.

It is found in the cytoplasm. Functionally, can catalyze the hydrolysis of ATP in the presence of single-stranded DNA, the ATP-dependent uptake of single-stranded DNA by duplex DNA, and the ATP-dependent hybridization of homologous single-stranded DNAs. It interacts with LexA causing its activation and leading to its autocatalytic cleavage. The protein is Protein RecA of Streptomyces ambofaciens.